A 149-amino-acid chain; its full sequence is Large ribosomal subunit protein eL8 (149 aa).

This sequence belongs to the eukaryotic ribosomal protein eL8 family. In terms of assembly, part of the 50S ribosomal subunit. Probably part of the RNase P complex.

It is found in the cytoplasm. Functionally, multifunctional RNA-binding protein that recognizes the K-turn motif in ribosomal RNA, the RNA component of RNase P, box H/ACA, box C/D and box C'/D' sRNAs. The chain is Large ribosomal subunit protein eL8 from Pyrobaculum calidifontis (strain DSM 21063 / JCM 11548 / VA1).